The chain runs to 95 residues: Pyrimidine/purine nucleoside phosphorylase (95 aa).

It belongs to the nucleoside phosphorylase PpnP family.

It catalyses the reaction a purine D-ribonucleoside + phosphate = a purine nucleobase + alpha-D-ribose 1-phosphate. It carries out the reaction adenosine + phosphate = alpha-D-ribose 1-phosphate + adenine. The catalysed reaction is cytidine + phosphate = cytosine + alpha-D-ribose 1-phosphate. The enzyme catalyses guanosine + phosphate = alpha-D-ribose 1-phosphate + guanine. It catalyses the reaction inosine + phosphate = alpha-D-ribose 1-phosphate + hypoxanthine. It carries out the reaction thymidine + phosphate = 2-deoxy-alpha-D-ribose 1-phosphate + thymine. The catalysed reaction is uridine + phosphate = alpha-D-ribose 1-phosphate + uracil. The enzyme catalyses xanthosine + phosphate = alpha-D-ribose 1-phosphate + xanthine. Functionally, catalyzes the phosphorolysis of diverse nucleosides, yielding D-ribose 1-phosphate and the respective free bases. Can use uridine, adenosine, guanosine, cytidine, thymidine, inosine and xanthosine as substrates. Also catalyzes the reverse reactions. The sequence is that of Pyrimidine/purine nucleoside phosphorylase from Edwardsiella ictaluri (strain 93-146).